The sequence spans 308 residues: Glutaminase (308 aa).

Substrate-binding residues include Ser-66, Asn-117, Glu-161, Asn-168, Tyr-192, Tyr-244, and Val-262.

This sequence belongs to the glutaminase family. Homotetramer.

The enzyme catalyses L-glutamine + H2O = L-glutamate + NH4(+). This Salmonella agona (strain SL483) protein is Glutaminase.